Here is a 389-residue protein sequence, read N- to C-terminus: Mannitol-1-phosphate 5-dehydrogenase (389 aa).

An NAD(+)-binding site is contributed by 5–16 (AIQFGGGNIGRG). The active site involves Lys214.

Belongs to the mannitol dehydrogenase family. As to quaternary structure, monomer.

The catalysed reaction is D-mannitol 1-phosphate + NAD(+) = beta-D-fructose 6-phosphate + NADH + H(+). Catalyzes the NAD(H)-dependent interconversion of D-fructose 6-phosphate and D-mannitol 1-phosphate in the mannitol metabolic pathway. In Talaromyces marneffei (strain ATCC 18224 / CBS 334.59 / QM 7333) (Penicillium marneffei), this protein is Mannitol-1-phosphate 5-dehydrogenase.